Reading from the N-terminus, the 288-residue chain is Bifunctional protein FolD (288 aa).

Residues 165 to 167 and Ser-190 contribute to the NADP(+) site; that span reads GRS.

The protein belongs to the tetrahydrofolate dehydrogenase/cyclohydrolase family. As to quaternary structure, homodimer.

The enzyme catalyses (6R)-5,10-methylene-5,6,7,8-tetrahydrofolate + NADP(+) = (6R)-5,10-methenyltetrahydrofolate + NADPH. The catalysed reaction is (6R)-5,10-methenyltetrahydrofolate + H2O = (6R)-10-formyltetrahydrofolate + H(+). Its pathway is one-carbon metabolism; tetrahydrofolate interconversion. In terms of biological role, catalyzes the oxidation of 5,10-methylenetetrahydrofolate to 5,10-methenyltetrahydrofolate and then the hydrolysis of 5,10-methenyltetrahydrofolate to 10-formyltetrahydrofolate. The polypeptide is Bifunctional protein FolD (Bdellovibrio bacteriovorus (strain ATCC 15356 / DSM 50701 / NCIMB 9529 / HD100)).